Here is a 277-residue protein sequence, read N- to C-terminus: Bifunctional protein FolD (277 aa).

NADP(+) is bound by residues 164–166, S189, and T230; that span reads GRS.

The protein belongs to the tetrahydrofolate dehydrogenase/cyclohydrolase family. Homodimer.

The enzyme catalyses (6R)-5,10-methylene-5,6,7,8-tetrahydrofolate + NADP(+) = (6R)-5,10-methenyltetrahydrofolate + NADPH. It carries out the reaction (6R)-5,10-methenyltetrahydrofolate + H2O = (6R)-10-formyltetrahydrofolate + H(+). It functions in the pathway one-carbon metabolism; tetrahydrofolate interconversion. Catalyzes the oxidation of 5,10-methylenetetrahydrofolate to 5,10-methenyltetrahydrofolate and then the hydrolysis of 5,10-methenyltetrahydrofolate to 10-formyltetrahydrofolate. This Clostridium perfringens (strain 13 / Type A) protein is Bifunctional protein FolD.